Consider the following 313-residue polypeptide: Tyrosine--tRNA ligase (313 aa).

Tyr32 lines the L-tyrosine pocket. The short motif at 37 to 45 (PSGEIHLGH) is the 'HIGH' region element. Tyr152, Gln156, Asp159, and Gln174 together coordinate L-tyrosine. Positions 208–212 (KMSSS) match the 'KMSKS' region motif. Position 211 (Ser211) interacts with ATP.

Belongs to the class-I aminoacyl-tRNA synthetase family. TyrS type 3 subfamily. Homodimer.

The protein resides in the cytoplasm. The catalysed reaction is tRNA(Tyr) + L-tyrosine + ATP = L-tyrosyl-tRNA(Tyr) + AMP + diphosphate + H(+). Its function is as follows. Catalyzes the attachment of tyrosine to tRNA(Tyr) in a two-step reaction: tyrosine is first activated by ATP to form Tyr-AMP and then transferred to the acceptor end of tRNA(Tyr). The polypeptide is Tyrosine--tRNA ligase (Methanospirillum hungatei JF-1 (strain ATCC 27890 / DSM 864 / NBRC 100397 / JF-1)).